The sequence spans 293 residues: Putative phosphoenolpyruvate synthase regulatory protein (293 aa).

Residue 173–180 coordinates ADP; that stretch reads GVSRCGKT.

This sequence belongs to the pyruvate, phosphate/water dikinase regulatory protein family. PSRP subfamily.

The enzyme catalyses [pyruvate, water dikinase] + ADP = [pyruvate, water dikinase]-phosphate + AMP + H(+). The catalysed reaction is [pyruvate, water dikinase]-phosphate + phosphate + H(+) = [pyruvate, water dikinase] + diphosphate. Its function is as follows. Bifunctional serine/threonine kinase and phosphorylase involved in the regulation of the phosphoenolpyruvate synthase (PEPS) by catalyzing its phosphorylation/dephosphorylation. This Photorhabdus laumondii subsp. laumondii (strain DSM 15139 / CIP 105565 / TT01) (Photorhabdus luminescens subsp. laumondii) protein is Putative phosphoenolpyruvate synthase regulatory protein.